The primary structure comprises 208 residues: Small ribosomal subunit protein uS4 (208 aa).

Positions 99–165 constitute an S4 RNA-binding domain; it reads RRLDNVVFQL…PRLKEILSSL (67 aa).

Belongs to the universal ribosomal protein uS4 family. In terms of assembly, part of the 30S ribosomal subunit. Contacts protein S5. The interaction surface between S4 and S5 is involved in control of translational fidelity.

One of the primary rRNA binding proteins, it binds directly to 16S rRNA where it nucleates assembly of the body of the 30S subunit. Its function is as follows. With S5 and S12 plays an important role in translational accuracy. The sequence is that of Small ribosomal subunit protein uS4 from Desulfitobacterium hafniense (strain DSM 10664 / DCB-2).